We begin with the raw amino-acid sequence, 648 residues long: Biosynthetic arginine decarboxylase (648 aa).

K109 carries the post-translational modification N6-(pyridoxal phosphate)lysine. 291 to 301 (LDVGGGLGVDY) serves as a coordination point for substrate.

The protein belongs to the Orn/Lys/Arg decarboxylase class-II family. SpeA subfamily. Mg(2+) is required as a cofactor. Pyridoxal 5'-phosphate serves as cofactor.

The enzyme catalyses L-arginine + H(+) = agmatine + CO2. Its function is as follows. Catalyzes the biosynthesis of agmatine from arginine. This is Biosynthetic arginine decarboxylase from Prochlorococcus marinus (strain MIT 9313).